The sequence spans 439 residues: Ribulose bisphosphate carboxylase/oxygenase activase 2, chloroplastic (439 aa).

The transit peptide at 1 to 58 (MATSVSTIGAANKAPLSLNNSVAGTSVPSTAFFGKTLKKVYGKGVSSPKVTNRSLRIA) directs the protein to the chloroplast. 169–176 (GGKGQGKS) is an ATP binding site.

This sequence belongs to the RuBisCO activase family.

It localises to the plastid. The protein resides in the chloroplast stroma. Activation of RuBisCO (ribulose-1,5-bisphosphate carboxylase/oxygenase; EC 4.1.1.39) involves the ATP-dependent carboxylation of the epsilon-amino group of lysine leading to a carbamate structure. This is Ribulose bisphosphate carboxylase/oxygenase activase 2, chloroplastic (RCA) from Nicotiana tabacum (Common tobacco).